Here is a 264-residue protein sequence, read N- to C-terminus: Isoprenyl transferase (264 aa).

Residue Asp-43 is part of the active site. Position 43 (Asp-43) interacts with Mg(2+). Substrate contacts are provided by residues Gly-44–Arg-47, Trp-48, Arg-56, His-60, and Ser-88–Glu-90. Catalysis depends on Asn-91, which acts as the Proton acceptor. Residues Trp-92, Arg-94, Arg-211, and Arg-217 to Ser-219 contribute to the substrate site. Glu-230 contributes to the Mg(2+) binding site.

The protein belongs to the UPP synthase family. In terms of assembly, homodimer. Mg(2+) is required as a cofactor.

Functionally, catalyzes the condensation of isopentenyl diphosphate (IPP) with allylic pyrophosphates generating different type of terpenoids. The chain is Isoprenyl transferase from Bifidobacterium longum (strain NCC 2705).